A 213-amino-acid polypeptide reads, in one-letter code: Ras-related protein Rab-2 (213 aa).

Residues Thr15, Gly16, Gly18, Lys19, Ser20, Cys21, Gln32, Pro33, His35, Thr38, Gly64, Asn119, Asp122, and Ala150 each contribute to the GTP site. Ser20 contributes to the Mg(2+) binding site. Thr38 is a binding site for Mg(2+). The disordered stretch occupies residues Gln190 to Cys213. 2 S-geranylgeranyl cysteine lipidation sites follow: Cys212 and Cys213.

Belongs to the small GTPase superfamily. Rab family. As to quaternary structure, interacts (GTP-bound form) with Vps16A and Vps39; the interaction with Vps39 is probably direct.

Its subcellular location is the vesicle. It is found in the cytoplasmic vesicle. The protein resides in the cell projection. The protein localises to the axon. It localises to the presynapse. Its subcellular location is the presynaptic active zone. It is found in the golgi apparatus. The protein resides in the trans-Golgi network. The protein localises to the perikaryon. It localises to the autophagosome membrane. Its subcellular location is the autolysosome membrane. The enzyme catalyses GTP + H2O = GDP + phosphate + H(+). In terms of biological role, may be involved in bidirectional endoplasmic reticulum (ER) to Golgi trafficking. Together with Rab7 involved in promoting fusion of autophagosomes and endosomes with lysosomes, probably through recruitment of the HOPS tethering complex. Involved in biosynthetic transport to lysosomes. In larval motor neurons, mediates the biogenesis of presynaptic cargo vesicles and their long-range axonal trafficking to synaptic termini. Not involved in axonal trafficking of mitochondria. During vesicle biogenesis, active zone proteins (including brp/Bruchpilot) and synaptic vesicle proteins (including VGlut) are sorted from the trans-Golgi in a Rab2-dependent manner via, at least, two independent routes. Acts upstream of Arl8 during presynaptic precursor vesicle biogenesis. Associated with lysosomal marker positive presynaptic cargo vesicles during anterograde and retrograde axonal trafficking, probably while in its GTP-bound active state. Involved in the delivery of presynaptic cargos, but not presynapse assembly or active zone function at synaptic termini. Required for autophagocytosis-dependent remodeling of myofibrils and transverse-tubules (T-tubules) during metamorphosis. The sequence is that of Ras-related protein Rab-2 from Drosophila melanogaster (Fruit fly).